We begin with the raw amino-acid sequence, 64 residues long: Enteric beta-defensin (64 aa).

A signal peptide spans 1–26 (MRLHHLLLTLLFLVLSAGSGFTQGIS). Intrachain disulfides connect Cys31–Cys60, Cys38–Cys53, and Cys43–Cys61.

Belongs to the beta-defensin family. LAP/TAP subfamily. In terms of tissue distribution, inducibly expressed in enteric epithelial cells.

The protein localises to the secreted. Functionally, has antibacterial activity. The sequence is that of Enteric beta-defensin (EBD) from Bos taurus (Bovine).